The following is a 226-amino-acid chain: uncharacterized protein (226 aa).

Residues 203–225 (FGISDIYTSTLSFGLIISLFYLL) traverse the membrane as a helical segment.

The protein resides in the membrane. This is an uncharacterized protein from Acanthamoeba polyphaga (Amoeba).